A 214-amino-acid polypeptide reads, in one-letter code: tRNA (guanine-N(7)-)-methyltransferase (214 aa).

Residues Glu-44, Glu-69, Asp-96, and Asp-118 each contribute to the S-adenosyl-L-methionine site. Residue Asp-118 is part of the active site. Residues Lys-122, Asp-154, and Thr-191–Glu-194 contribute to the substrate site.

Belongs to the class I-like SAM-binding methyltransferase superfamily. TrmB family.

It carries out the reaction guanosine(46) in tRNA + S-adenosyl-L-methionine = N(7)-methylguanosine(46) in tRNA + S-adenosyl-L-homocysteine. It functions in the pathway tRNA modification; N(7)-methylguanine-tRNA biosynthesis. Catalyzes the formation of N(7)-methylguanine at position 46 (m7G46) in tRNA. In Listeria welshimeri serovar 6b (strain ATCC 35897 / DSM 20650 / CCUG 15529 / CIP 8149 / NCTC 11857 / SLCC 5334 / V8), this protein is tRNA (guanine-N(7)-)-methyltransferase.